Reading from the N-terminus, the 366-residue chain is MATPVPLVFNAPKRGMPPTHFADLNDEARIEALKELGLPKFRLNQIARHYYGRLEADPLTMTDLPEGARQEVKDALFPTLMSPLRVVETDDDTTQKTLWKLHDGTLLESVLMRYSDRSTLCISSQAGCGMACPFCATGQGGLDRNLSIGEIVDQVRNAAATMQSEGGRLSNIVFMGMGEPLANYKRVVSAVRQITQPSPAGFGISQRSVTVSTVGLAPAIRKLADEEMSVTLAVSLHTPDDELRDTLVPVNNRWPVAEVLDAARYYADKSGRRVSIEYALIRDVNDQDWRADMLGEKLHKALGSRVHVNLIPLNPTPGSKWDAAPKARQDEFVRRVIAKGVPCTVRDTKGQEIAAACGQLAAEESA.

E108 functions as the Proton acceptor in the catalytic mechanism. One can recognise a Radical SAM core domain in the interval 114 to 352 (YSDRSTLCIS…CTVRDTKGQE (239 aa)). An intrachain disulfide couples C121 to C357. Residues C128, C132, and C135 each contribute to the [4Fe-4S] cluster site. S-adenosyl-L-methionine-binding positions include 178-179 (GE), S212, 235-237 (SLH), and N314. Catalysis depends on C357, which acts as the S-methylcysteine intermediate.

Belongs to the radical SAM superfamily. RlmN family. Requires [4Fe-4S] cluster as cofactor.

The protein localises to the cytoplasm. The enzyme catalyses adenosine(2503) in 23S rRNA + 2 reduced [2Fe-2S]-[ferredoxin] + 2 S-adenosyl-L-methionine = 2-methyladenosine(2503) in 23S rRNA + 5'-deoxyadenosine + L-methionine + 2 oxidized [2Fe-2S]-[ferredoxin] + S-adenosyl-L-homocysteine. It carries out the reaction adenosine(37) in tRNA + 2 reduced [2Fe-2S]-[ferredoxin] + 2 S-adenosyl-L-methionine = 2-methyladenosine(37) in tRNA + 5'-deoxyadenosine + L-methionine + 2 oxidized [2Fe-2S]-[ferredoxin] + S-adenosyl-L-homocysteine. In terms of biological role, specifically methylates position 2 of adenine 2503 in 23S rRNA and position 2 of adenine 37 in tRNAs. The protein is Probable dual-specificity RNA methyltransferase RlmN of Corynebacterium glutamicum (strain ATCC 13032 / DSM 20300 / JCM 1318 / BCRC 11384 / CCUG 27702 / LMG 3730 / NBRC 12168 / NCIMB 10025 / NRRL B-2784 / 534).